Reading from the N-terminus, the 427-residue chain is Adenylosuccinate synthetase (427 aa).

GTP contacts are provided by residues 13–19 and 41–43; these read GDEGKGK and GHT. Asp-14 acts as the Proton acceptor in catalysis. Residues Asp-14 and Gly-41 each contribute to the Mg(2+) site. Residues 14 to 17, 39 to 42, Thr-129, Arg-143, Gln-224, Thr-239, and Arg-303 contribute to the IMP site; these read DEGK and NAGH. His-42 (proton donor) is an active-site residue. The disordered stretch occupies residues 117-137; sequence QEKQRGEESLGTTKRGIGPAY. Position 299–305 (299–305) interacts with substrate; sequence TTTGRPR. Residues Arg-305, 331 to 333, and 414 to 416 each bind GTP; these read KLD and GTG.

Belongs to the adenylosuccinate synthetase family. As to quaternary structure, homodimer. Mg(2+) serves as cofactor.

The protein localises to the cytoplasm. It carries out the reaction IMP + L-aspartate + GTP = N(6)-(1,2-dicarboxyethyl)-AMP + GDP + phosphate + 2 H(+). It participates in purine metabolism; AMP biosynthesis via de novo pathway; AMP from IMP: step 1/2. Plays an important role in the de novo pathway of purine nucleotide biosynthesis. Catalyzes the first committed step in the biosynthesis of AMP from IMP. The polypeptide is Adenylosuccinate synthetase (Caldicellulosiruptor saccharolyticus (strain ATCC 43494 / DSM 8903 / Tp8T 6331)).